The primary structure comprises 193 residues: Ion-translocating oxidoreductase complex subunit A (193 aa).

Transmembrane regions (helical) follow at residues 5–25, 39–59, 65–85, 102–122, 134–154, and 171–191; these read ILLIISTALINNFVLVKFLGL, IGMGMATTFVLTVASLSAYLV, IPLEAQFLRTLVFILVIAVIV, LLGIYLPLITTNCAVLGVALL, VLYGFGAALGFSLVLVLFAAL, and SIALITAGLMSLAFMGFTGLV.

The protein belongs to the NqrDE/RnfAE family. As to quaternary structure, the complex is composed of six subunits: RnfA, RnfB, RnfC, RnfD, RnfE and RnfG.

Its subcellular location is the cell inner membrane. Functionally, part of a membrane-bound complex that couples electron transfer with translocation of ions across the membrane. The chain is Ion-translocating oxidoreductase complex subunit A from Actinobacillus pleuropneumoniae serotype 5b (strain L20).